The sequence spans 154 residues: Ecotin-like protein 2 (154 aa).

Belongs to the protease inhibitor I11 (ecotin) family.

In Leishmania braziliensis, this protein is Ecotin-like protein 2.